Consider the following 335-residue polypeptide: MIEADRIISTSAKGDEEYIDRAIRPKLLNDYVGQPHVCEQMAIFIQAAKLRQDALDHLLIFGPPGLGKTTLANIVAHEMGVNIRTTSGPVLEKAGDLAAMLTNLEPHDVLFIDEIHRLSPAIEEVLYPAMEDYQLDIMIGEGPAARSIKLDLPPFTLIGATTRAGSLTSPLRDRFGIVQRLEFYAVEDLTSIVARSANCLNLSISDTACYEIARRSRGTPRIANRLLRRVRDFADVRHAGIISEESAKAALLMLDVDDAGFDYLDRKLLNAVIERFDGGPVGLDNLAAAIGEERETIEDVLEPYLIQQGFLQRTPRGRMATSRTYRYFGLEKLTE.

A large ATPase domain (RuvB-L) region spans residues 4–184; the sequence is ADRIISTSAK…FGIVQRLEFY (181 aa). ATP-binding positions include Ile23, Arg24, Gly65, Lys68, Thr69, Thr70, 131 to 133, Arg174, Tyr184, and Arg221; that span reads EDY. A Mg(2+)-binding site is contributed by Thr69. The interval 185 to 255 is small ATPAse domain (RuvB-S); sequence AVEDLTSIVA…SAKAALLMLD (71 aa). Residues 258–335 are head domain (RuvB-H); that stretch reads DAGFDYLDRK…RYFGLEKLTE (78 aa). 3 residues coordinate DNA: Arg294, Arg313, and Arg318.

This sequence belongs to the RuvB family. Homohexamer. Forms an RuvA(8)-RuvB(12)-Holliday junction (HJ) complex. HJ DNA is sandwiched between 2 RuvA tetramers; dsDNA enters through RuvA and exits via RuvB. An RuvB hexamer assembles on each DNA strand where it exits the tetramer. Each RuvB hexamer is contacted by two RuvA subunits (via domain III) on 2 adjacent RuvB subunits; this complex drives branch migration. In the full resolvosome a probable DNA-RuvA(4)-RuvB(12)-RuvC(2) complex forms which resolves the HJ.

It is found in the cytoplasm. It catalyses the reaction ATP + H2O = ADP + phosphate + H(+). Its function is as follows. The RuvA-RuvB-RuvC complex processes Holliday junction (HJ) DNA during genetic recombination and DNA repair, while the RuvA-RuvB complex plays an important role in the rescue of blocked DNA replication forks via replication fork reversal (RFR). RuvA specifically binds to HJ cruciform DNA, conferring on it an open structure. The RuvB hexamer acts as an ATP-dependent pump, pulling dsDNA into and through the RuvAB complex. RuvB forms 2 homohexamers on either side of HJ DNA bound by 1 or 2 RuvA tetramers; 4 subunits per hexamer contact DNA at a time. Coordinated motions by a converter formed by DNA-disengaged RuvB subunits stimulates ATP hydrolysis and nucleotide exchange. Immobilization of the converter enables RuvB to convert the ATP-contained energy into a lever motion, pulling 2 nucleotides of DNA out of the RuvA tetramer per ATP hydrolyzed, thus driving DNA branch migration. The RuvB motors rotate together with the DNA substrate, which together with the progressing nucleotide cycle form the mechanistic basis for DNA recombination by continuous HJ branch migration. Branch migration allows RuvC to scan DNA until it finds its consensus sequence, where it cleaves and resolves cruciform DNA. The chain is Holliday junction branch migration complex subunit RuvB from Pasteurella multocida (strain Pm70).